Reading from the N-terminus, the 469-residue chain is UDP-N-acetylmuramate--L-alanine ligase (469 aa).

G113–T119 contributes to the ATP binding site.

It belongs to the MurCDEF family.

The protein resides in the cytoplasm. The enzyme catalyses UDP-N-acetyl-alpha-D-muramate + L-alanine + ATP = UDP-N-acetyl-alpha-D-muramoyl-L-alanine + ADP + phosphate + H(+). Its pathway is cell wall biogenesis; peptidoglycan biosynthesis. Functionally, cell wall formation. This is UDP-N-acetylmuramate--L-alanine ligase from Neisseria gonorrhoeae (strain ATCC 700825 / FA 1090).